Here is a 207-residue protein sequence, read N- to C-terminus: MYDYIRGILTYMSSGTLVIECQGLGFNIFAPDRWLIELSGQLHREVVVYTYTVVRETEHVLYGFSSRRERECFRMLISFSGVGPKTGLAILNTFSLSKLCSIARAEDVRAIASVPGIGKKTAEKLMVDLKQKLPDLLPLDSKAIASWESVKPSCMDEGIQALAALGYSKPSAERMIAEAMSELPENASLAEILPIALKKNLQGLNKS.

The tract at residues 1–65 (MYDYIRGILT…ETEHVLYGFS (65 aa)) is domain I. Residues 66–144 (SRRERECFRM…DLLPLDSKAI (79 aa)) are domain II. Residues 145–155 (ASWESVKPSCM) are flexible linker. Residues 155-207 (MDEGIQALAALGYSKPSAERMIAEAMSELPENASLAEILPIALKKNLQGLNKS) are domain III.

This sequence belongs to the RuvA family. In terms of assembly, homotetramer. Forms an RuvA(8)-RuvB(12)-Holliday junction (HJ) complex. HJ DNA is sandwiched between 2 RuvA tetramers; dsDNA enters through RuvA and exits via RuvB. An RuvB hexamer assembles on each DNA strand where it exits the tetramer. Each RuvB hexamer is contacted by two RuvA subunits (via domain III) on 2 adjacent RuvB subunits; this complex drives branch migration. In the full resolvosome a probable DNA-RuvA(4)-RuvB(12)-RuvC(2) complex forms which resolves the HJ.

It localises to the cytoplasm. The RuvA-RuvB-RuvC complex processes Holliday junction (HJ) DNA during genetic recombination and DNA repair, while the RuvA-RuvB complex plays an important role in the rescue of blocked DNA replication forks via replication fork reversal (RFR). RuvA specifically binds to HJ cruciform DNA, conferring on it an open structure. The RuvB hexamer acts as an ATP-dependent pump, pulling dsDNA into and through the RuvAB complex. HJ branch migration allows RuvC to scan DNA until it finds its consensus sequence, where it cleaves and resolves the cruciform DNA. This chain is Holliday junction branch migration complex subunit RuvA, found in Chlamydia caviae (strain ATCC VR-813 / DSM 19441 / 03DC25 / GPIC) (Chlamydophila caviae).